A 152-amino-acid chain; its full sequence is Ribosomal RNA large subunit methyltransferase H (152 aa).

Residues Leu70, Gly101, and 120-125 each bind S-adenosyl-L-methionine; that span reads LSDLTF.

This sequence belongs to the RNA methyltransferase RlmH family. As to quaternary structure, homodimer.

The protein localises to the cytoplasm. It carries out the reaction pseudouridine(1915) in 23S rRNA + S-adenosyl-L-methionine = N(3)-methylpseudouridine(1915) in 23S rRNA + S-adenosyl-L-homocysteine + H(+). Its function is as follows. Specifically methylates the pseudouridine at position 1915 (m3Psi1915) in 23S rRNA. The protein is Ribosomal RNA large subunit methyltransferase H of Pseudothermotoga lettingae (strain ATCC BAA-301 / DSM 14385 / NBRC 107922 / TMO) (Thermotoga lettingae).